A 129-amino-acid chain; its full sequence is MLVKFVACFVFVAVASASDFSSFSYGVADPSTGDFKSQIESRLGDNVQGQYSLLESDGTQRTVDYAAGSEGFNAVVRKDPALIAAAPYITAPYGYAVPYAYTSPYGISNLANYRALKFASALPYSRVFF.

Positions 1 to 17 (MLVKFVACFVFVAVASA) are cleaved as a signal peptide. The Chitin-binding type R&amp;R domain occupies 18-90 (SDFSSFSYGV…ALIAAAPYIT (73 aa)).

Expressed in larval wing disc, forewing disc, diapausing wing, adult wing, and in very low amounts in fat body and testes.

Component of the rigid cuticle of the larva and pupa of Hyalophora cecropia. This chain is Larval/pupal rigid cuticle protein 66 (CP66), found in Hyalophora cecropia (Cecropia moth).